The primary structure comprises 583 residues: Hyaluronan synthase-related protein (583 aa).

Residues 1 to 29 (MENTTDPENIPVSKPKYPTIRRILSQTFR) are Cytoplasmic-facing. Residues 30-50 (ILLLFSITTAYVLGYQALCHQ) traverse the membrane as a helical segment. At 51-52 (GL) the chain is on the extracellular side. Residues 53-73 (LITFGLYGAAMLLHLLMQGIF) form a helical membrane-spanning segment. Residues 74 to 393 (ANLEIRRIEK…CNAQWWHQHH (320 aa)) are Cytoplasmic-facing. A helical transmembrane segment spans residues 394–414 (IWMTYESATGIFFPFFVTAVL). Residues 415–425 (IRLMYSSSLCN) are Extracellular-facing. A helical transmembrane segment spans residues 426–446 (IVWLFLCIQIMSLLLSLYASW). Residues 447–457 (QSKKLSMVLMS) are Cytoplasmic-facing. The helical transmembrane segment at 458 to 478 (LYSTLYIIWLLPCQLVALLTI) threads the bilayer. Residues 479–497 (AKSDWGTSGRKKVVNNYVP) lie on the Extracellular side of the membrane. The helical transmembrane segment at 498-518 (LFSLSIWAAVLLGGLCYSMYI) threads the bilayer. Topologically, residues 519–535 (GCRKDWSKPQANRELYH) are cytoplasmic. A helical transmembrane segment spans residues 536–556 (LLYGCAGYMAYWVLMTVIYCV). At 557–583 (SGSCCKMRSQAVPQTHDITSLSVSLLV) the chain is on the extracellular side.

Belongs to the NodC/HAS family.

It localises to the membrane. This is Hyaluronan synthase-related protein (has-rs) from Xenopus laevis (African clawed frog).